We begin with the raw amino-acid sequence, 88 residues long: Small ribosomal subunit protein uS17 (88 aa).

The protein belongs to the universal ribosomal protein uS17 family. Part of the 30S ribosomal subunit.

In terms of biological role, one of the primary rRNA binding proteins, it binds specifically to the 5'-end of 16S ribosomal RNA. The protein is Small ribosomal subunit protein uS17 of Nitratidesulfovibrio vulgaris (strain DSM 19637 / Miyazaki F) (Desulfovibrio vulgaris).